Here is a 303-residue protein sequence, read N- to C-terminus: Mycothiol acetyltransferase (303 aa).

2 N-acetyltransferase domains span residues 1 to 150 and 162 to 303; these read MALL…RPLD and VTIR…QFGR. E18 provides a ligand contact to 1D-myo-inositol 2-(L-cysteinylamino)-2-deoxy-alpha-D-glucopyranoside. 77–79 contacts acetyl-CoA; the sequence is LAV. 1D-myo-inositol 2-(L-cysteinylamino)-2-deoxy-alpha-D-glucopyranoside is bound by residues E189, K229, and E237. Residues 241–243 and 248–254 each bind acetyl-CoA; these read VGV and QGNGLGR. Y275 contributes to the 1D-myo-inositol 2-(L-cysteinylamino)-2-deoxy-alpha-D-glucopyranoside binding site. 280–285 contributes to the acetyl-CoA binding site; that stretch reads NTAAIK.

This sequence belongs to the acetyltransferase family. MshD subfamily. In terms of assembly, monomer.

The enzyme catalyses 1D-myo-inositol 2-(L-cysteinylamino)-2-deoxy-alpha-D-glucopyranoside + acetyl-CoA = mycothiol + CoA + H(+). Catalyzes the transfer of acetyl from acetyl-CoA to desacetylmycothiol (Cys-GlcN-Ins) to form mycothiol. The sequence is that of Mycothiol acetyltransferase from Saccharopolyspora erythraea (strain ATCC 11635 / DSM 40517 / JCM 4748 / NBRC 13426 / NCIMB 8594 / NRRL 2338).